Here is a 154-residue protein sequence, read N- to C-terminus: Ribosome maturation factor RimP (154 aa).

Belongs to the RimP family.

It is found in the cytoplasm. Required for maturation of 30S ribosomal subunits. The chain is Ribosome maturation factor RimP from Salmonella agona (strain SL483).